The sequence spans 1106 residues: Zinc finger protein GLI1 (1106 aa).

Residues 1–20 (MFNSMTPPPISSYGEPCCLR) form an SNAG domain region. The interaction with SUFU stretch occupies residues 120–124 (SYGHL). 5 C2H2-type zinc fingers span residues 235 to 260 (TDCR…NSEH), 268 to 295 (FVCH…MRRH), 301 to 325 (HKCT…LRSH), 331 to 356 (YMCE…NRTH), and 362 to 387 (YVCK…KTVH). The interval 283–291 (KAQYMLVVH) is interaction with DNA. Interaction with DNA regions lie at residues 345–350 (ASDRAK) and 375–381 (DPSSLRK). Disordered regions lie at residues 375–485 (DPSS…DEGP), 516–580 (GLKL…SLPG), 732–792 (YGGP…LYPG), 817–889 (EQGC…PTHS), and 914–942 (GRED…SRAK). Basic and acidic residues predominate over residues 413 to 428 (EPKREREGGPIREESR). The span at 442-463 (PGAQSSCSSDHSPAGSAANTDS) shows a compositional bias: polar residues. At K518 the chain carries N6-acetyllysine. Composition is skewed to low complexity over residues 544-560 (SSSS…RRSS) and 737-753 (GAAA…SLPL). The span at 754–766 (GPGPPTNYGPNPC) shows a compositional bias: pro residues. The span at 768 to 779 (QQASYPDPTQET) shows a compositional bias: polar residues. K1003 participates in a covalent cross-link: Glycyl lysine isopeptide (Lys-Gly) (interchain with G-Cter in SUMO2). Positions 1054–1087 (DEPQGLSPPPSHDQRGSSGHTPPPSGPPNMAVGN) are disordered.

The protein belongs to the GLI C2H2-type zinc-finger protein family. As to quaternary structure, interacts with KIF7. Interacts with STK36. Interacts with ZIC1; the interaction enhances transcription activation. Interacts with SUFU; this inhibits transcriptional activation by GLI1. In terms of processing, phosphorylated in vitro by ULK3. Post-translationally, acetylation at Lys-518 down-regulates transcriptional activity. Deacetylated by HDAC1. Ubiquitinated by the CRL2(FEM1B) complex, suppressing GLI1 transcriptional activator activity. As to expression, detected in testis (at protein level). Testis, myometrium and fallopian tube. Also expressed in the brain with highest expression in the cerebellum, optic nerve and olfactory tract. Isoform 1 is detected in brain, spleen, pancreas, liver, kidney and placenta; isoform 2 is not detectable in these tissues.

The protein localises to the cytoplasm. It localises to the nucleus. Functionally, acts as a transcriptional activator. Binds to the DNA consensus sequence 5'-GACCACCCA-3'. Regulates the transcription of specific genes during normal development. Plays a role in craniofacial development and digital development, as well as development of the central nervous system and gastrointestinal tract. Mediates SHH signaling. Plays a role in cell proliferation and differentiation via its role in SHH signaling. Its function is as follows. Acts as a transcriptional activator, but activates a different set of genes than isoform 1. Activates expression of CD24, unlike isoform 1. Mediates SHH signaling. Promotes cancer cell migration. This Homo sapiens (Human) protein is Zinc finger protein GLI1 (GLI1).